Consider the following 247-residue polypeptide: Probable transcriptional regulatory protein Asuc_1803 (247 aa).

The protein belongs to the TACO1 family.

The protein localises to the cytoplasm. The chain is Probable transcriptional regulatory protein Asuc_1803 from Actinobacillus succinogenes (strain ATCC 55618 / DSM 22257 / CCUG 43843 / 130Z).